The sequence spans 536 residues: Beta-hexosaminidase subunit beta (536 aa).

An N-terminal signal peptide occupies residues 1-31 (MPQSPRSAPGLLLLQALVSLVSLALVAPARL). A glycan (N-linked (GlcNAc...) asparagine) is linked at Asn63. Cys70 and Cys116 are joined by a disulfide. Residues Asn169 and Asn306 are each glycosylated (N-linked (GlcNAc...) asparagine). 2 disulfides stabilise this stretch: Cys288/Cys339 and Cys513/Cys530. Glu334 serves as the catalytic Proton donor.

It belongs to the glycosyl hydrolase 20 family. As to quaternary structure, there are 3 forms of beta-hexosaminidase: hexosaminidase A is a heterodimer composed of one subunit alpha and one subunit beta (chain A and B); hexosaminidase B is a homodimer of two beta subunits (two chains A and B); hexosaminidase S is a homodimer of two alpha subunits. The composition of the dimer (isozyme A versus isozyme S) has a significant effect on the substrate specificity of the alpha subunit active site.

The protein resides in the lysosome. It localises to the cytoplasmic vesicle. It is found in the secretory vesicle. Its subcellular location is the cortical granule. It catalyses the reaction Hydrolysis of terminal non-reducing N-acetyl-D-hexosamine residues in N-acetyl-beta-D-hexosaminides.. The catalysed reaction is N-acetyl-beta-D-galactosaminyl-(1-&gt;4)-beta-D-3-sulfogalactosyl-(1-&gt;4)-beta-D-glucosyl-(1&lt;-&gt;1')-ceramide + H2O = a beta-D-3-sulfogalactosyl-(1-&gt;4)-beta-D-glucosyl-(1&lt;-&gt;1')-ceramide + N-acetyl-beta-D-galactosamine. The enzyme catalyses a ganglioside GM2 (d18:1(4E)) + H2O = a ganglioside GM3 (d18:1(4E)) + N-acetyl-beta-D-galactosamine. It carries out the reaction a ganglioside GM2 + H2O = a ganglioside GM3 + N-acetyl-beta-D-galactosamine. It catalyses the reaction beta-D-GalNAc-(1-&gt;4)-alpha-L-IdoA-(1-&gt;3)-beta-D-GalNAc-4-sulfate-(1-&gt;4)-alpha-L-IdoA-(1-&gt;3)-D-GalNAc-4-sulfate + H2O = alpha-L-IdoA-(1-&gt;3)-beta-D-GalNAc-4-sulfate-(1-&gt;4)-alpha-L-IdoA-(1-&gt;3)-D-GalNAc-4-sulfate + N-acetyl-D-galactosamine. The catalysed reaction is N-acetyl-beta-D-6-sulfogalactosaminyl-(1-&gt;4)-alpha-L-iduronyl-(1-&gt;3)-N-acetyl-D-6-sulfogalactosamine + H2O = alpha-L-iduronyl-(1-&gt;3)-N-acetyl-D-6-sulfogalactosamine + N-acetyl-D-6-sulfogalactosamine. Addition of GM2A stimulates the hydrolysis of sulfated glycosphingolipid SM2 and the ganglioside GM2. Functionally, hydrolyzes the non-reducing end N-acetyl-D-hexosamine and/or sulfated N-acetyl-D-hexosamine of glycoconjugates, such as the oligosaccharide moieties from proteins and neutral glycolipids, or from certain mucopolysaccharides. The isozyme B does not hydrolyze each of these substrates, however hydrolyzes efficiently neutral oligosaccharide. Only the isozyme A is responsible for the degradation of GM2 gangliosides in the presence of GM2A. During fertilization is responsible, at least in part, for the zona block to polyspermy. Present in the cortical granules of non-activated oocytes, is exocytosed during the cortical reaction in response to oocyte activation and inactivates the sperm galactosyltransferase-binding site, accounting for the block in sperm binding to the zona pellucida. The protein is Beta-hexosaminidase subunit beta of Mus musculus (Mouse).